A 121-amino-acid polypeptide reads, in one-letter code: Ribonuclease P protein component (121 aa).

The protein belongs to the RnpA family. As to quaternary structure, consists of a catalytic RNA component (M1 or rnpB) and a protein subunit.

It carries out the reaction Endonucleolytic cleavage of RNA, removing 5'-extranucleotides from tRNA precursor.. Functionally, RNaseP catalyzes the removal of the 5'-leader sequence from pre-tRNA to produce the mature 5'-terminus. It can also cleave other RNA substrates such as 4.5S RNA. The protein component plays an auxiliary but essential role in vivo by binding to the 5'-leader sequence and broadening the substrate specificity of the ribozyme. In Erythrobacter litoralis (strain HTCC2594), this protein is Ribonuclease P protein component.